The chain runs to 532 residues: MRINTLSLFSLVSLVPTLALASLSGSVGPLTSASTKAATKTCNVLDYGAKADKTTDLGPPLASAFADCKSGGLVYVPSGDYALSTWAKLSGGKAWALQIDGTIYRTGTDGGNMIFIEHSSDFELFSSTSSGAMQGLGYEYHKDNKWSGPRLLRLYDVTDFSVHDFILVDAPAFHFSLDTCTNGEVYNMAIRGGNHGGLDGVDVWSTNVWIHDIEVTNKDECVTVKSPSKNILVENIYCNWSGGCGMGSLGKDTDISDITYRNIYTWNSNNMMFIKSNGGSGSATNLLFENFIGHGNAYSFDIDSYWASMSSQGGNGVELSNITLRNWKGTEENGASRGPIKIVCPDGAPCYDITIEDFAMWTEDSSRQRQWYSCRNAYGTGFCLKSGSNHVAYEATTTTVSSAPSGYSAATMAADLKTDFGITASIPIPTIPTSFYPGATPYSALMANKGSTAKVRAVVAPSKPTTVAAATSTPAEQQTSTSTPAPAVEQPSQQSPGQSAGEVGGCPFGNGRSVPTGPPRAGHRHHQRHGHH.

The signal sequence occupies residues 1-21 (MRINTLSLFSLVSLVPTLALA). A disulfide bond links C42 and C68. D219 (proton donor) is an active-site residue. C221 and C238 are joined by a disulfide. N239 carries N-linked (GlcNAc...) asparagine glycosylation. The active site involves H294. An N-linked (GlcNAc...) asparagine glycan is attached at N321. Intrachain disulfides connect C344–C350 and C374–C383. 2 stretches are compositionally biased toward low complexity: residues 466 to 475 (TVAAATSTPA) and 490 to 499 (QPSQQSPGQS). Positions 466–532 (TVAAATSTPA…HRHHQRHGHH (67 aa)) are disordered. A compositionally biased stretch (basic residues) spans 521 to 532 (AGHRHHQRHGHH).

It belongs to the glycosyl hydrolase 28 family.

The protein resides in the secreted. The catalysed reaction is Endohydrolysis of alpha-D-GalA-(1-&gt;2)-alpha-L-Rha glycosidic bond in the rhamnogalacturonan I backbone with initial inversion of anomeric configuration releasing oligosaccharides with beta-D-GalA at the reducing end.. In terms of biological role, pectinolytic enzymes consist of four classes of enzymes: pectine lyase, polygalacturonase, pectin methylesterase and rhamnogalacturonase. Hydrolyzes alpha-D-galacturonopyranosyl-(1,2)-alpha-L-rhamnopyranosyl linkages in the backbone of the hairy regions of pectins. The protein is Probable rhamnogalacturonase B (rhgB) of Aspergillus oryzae (strain ATCC 42149 / RIB 40) (Yellow koji mold).